A 141-amino-acid polypeptide reads, in one-letter code: ATP synthase epsilon chain (141 aa).

This sequence belongs to the ATPase epsilon chain family. F-type ATPases have 2 components, CF(1) - the catalytic core - and CF(0) - the membrane proton channel. CF(1) has five subunits: alpha(3), beta(3), gamma(1), delta(1), epsilon(1). CF(0) has three main subunits: a, b and c.

It localises to the cell inner membrane. In terms of biological role, produces ATP from ADP in the presence of a proton gradient across the membrane. This is ATP synthase epsilon chain from Teredinibacter turnerae (strain ATCC 39867 / T7901).